We begin with the raw amino-acid sequence, 589 residues long: CTP synthase (589 aa).

Positions 1 to 281 (MPQSRTHSRT…DAYVVRQLGL (281 aa)) are amidoligase domain. Ser-23 contributes to the CTP binding site. Residue Ser-23 participates in UTP binding. ATP is bound by residues 24–29 (SLGKGL) and Asp-81. Mg(2+)-binding residues include Asp-81 and Glu-155. Residues 162-164 (DIE), 202-207 (KTKPTQ), and Lys-238 contribute to the CTP site. UTP-binding positions include 202 to 207 (KTKPTQ) and Lys-238. In terms of domain architecture, Glutamine amidotransferase type-1 spans 306–554 (RIALVGKYVD…VDAALRHKLE (249 aa)). L-glutamine is bound at residue Gly-369. The Nucleophile; for glutamine hydrolysis role is filled by Cys-396. Residues 397 to 400 (LGLQ), Glu-419, and Arg-480 each bind L-glutamine. Residues His-527 and Glu-529 contribute to the active site. Positions 562-589 (HGEERAAADDEIAESADRDEVASVDSAG) are disordered.

This sequence belongs to the CTP synthase family. In terms of assembly, homotetramer.

It catalyses the reaction UTP + L-glutamine + ATP + H2O = CTP + L-glutamate + ADP + phosphate + 2 H(+). It carries out the reaction L-glutamine + H2O = L-glutamate + NH4(+). The enzyme catalyses UTP + NH4(+) + ATP = CTP + ADP + phosphate + 2 H(+). It participates in pyrimidine metabolism; CTP biosynthesis via de novo pathway; CTP from UDP: step 2/2. With respect to regulation, allosterically activated by GTP, when glutamine is the substrate; GTP has no effect on the reaction when ammonia is the substrate. The allosteric effector GTP functions by stabilizing the protein conformation that binds the tetrahedral intermediate(s) formed during glutamine hydrolysis. Inhibited by the product CTP, via allosteric rather than competitive inhibition. Catalyzes the ATP-dependent amination of UTP to CTP with either L-glutamine or ammonia as the source of nitrogen. Regulates intracellular CTP levels through interactions with the four ribonucleotide triphosphates. The protein is CTP synthase of Rhodococcus opacus (strain B4).